The chain runs to 1375 residues: DNA-directed RNA polymerase subunit beta (1375 aa).

This sequence belongs to the RNA polymerase beta chain family. The RNAP catalytic core consists of 2 alpha, 1 beta, 1 beta' and 1 omega subunit. When a sigma factor is associated with the core the holoenzyme is formed, which can initiate transcription.

The catalysed reaction is RNA(n) + a ribonucleoside 5'-triphosphate = RNA(n+1) + diphosphate. DNA-dependent RNA polymerase catalyzes the transcription of DNA into RNA using the four ribonucleoside triphosphates as substrates. In Malacoplasma penetrans (strain HF-2) (Mycoplasma penetrans), this protein is DNA-directed RNA polymerase subunit beta.